Reading from the N-terminus, the 301-residue chain is GTPase Era (301 aa).

An Era-type G domain is found at 4–173 (KAGFVALIGK…LECISQHLSP (170 aa)). The interval 12 to 19 (GKPNAGKS) is G1. Position 12–19 (12–19 (GKPNAGKS)) interacts with GTP. The G2 stretch occupies residues 38–42 (NATRK). Positions 64–67 (DTPG) are G3. GTP contacts are provided by residues 64–68 (DTPGL) and 122–125 (SKID). Residues 122–125 (SKID) form a G4 region. The G5 stretch occupies residues 152–154 (LSA). In terms of domain architecture, KH type-2 spans 204 to 280 (LSDEIPYESD…FLNLQVIAQK (77 aa)).

This sequence belongs to the TRAFAC class TrmE-Era-EngA-EngB-Septin-like GTPase superfamily. Era GTPase family. In terms of assembly, monomer.

It is found in the cytoplasm. The protein localises to the cell inner membrane. An essential GTPase that binds both GDP and GTP, with rapid nucleotide exchange. Plays a role in 16S rRNA processing and 30S ribosomal subunit biogenesis and possibly also in cell cycle regulation and energy metabolism. This chain is GTPase Era, found in Helicobacter pylori (strain ATCC 700392 / 26695) (Campylobacter pylori).